The chain runs to 123 residues: Transmembrane protein 254 (123 aa).

3 helical membrane-spanning segments follow: residues Leu15 to Pro35, Asn63 to Cys83, and Leu95 to Tyr115.

It localises to the membrane. This is Transmembrane protein 254 (Tmem254) from Rattus norvegicus (Rat).